The following is a 288-amino-acid chain: ATP synthase gamma chain (288 aa).

Belongs to the ATPase gamma chain family. In terms of assembly, F-type ATPases have 2 components, CF(1) - the catalytic core - and CF(0) - the membrane proton channel. CF(1) has five subunits: alpha(3), beta(3), gamma(1), delta(1), epsilon(1). CF(0) has three main subunits: a, b and c.

It is found in the cell inner membrane. In terms of biological role, produces ATP from ADP in the presence of a proton gradient across the membrane. The gamma chain is believed to be important in regulating ATPase activity and the flow of protons through the CF(0) complex. This chain is ATP synthase gamma chain, found in Vibrio parahaemolyticus serotype O3:K6 (strain RIMD 2210633).